The following is a 188-amino-acid chain: Peptidyl-tRNA hydrolase (188 aa).

Y14 serves as a coordination point for tRNA. H19 (proton acceptor) is an active-site residue. The tRNA site is built by Y64, N66, and N112.

This sequence belongs to the PTH family. Monomer.

The protein localises to the cytoplasm. It carries out the reaction an N-acyl-L-alpha-aminoacyl-tRNA + H2O = an N-acyl-L-amino acid + a tRNA + H(+). In terms of biological role, hydrolyzes ribosome-free peptidyl-tRNAs (with 1 or more amino acids incorporated), which drop off the ribosome during protein synthesis, or as a result of ribosome stalling. Functionally, catalyzes the release of premature peptidyl moieties from peptidyl-tRNA molecules trapped in stalled 50S ribosomal subunits, and thus maintains levels of free tRNAs and 50S ribosomes. This Bacillus velezensis (strain DSM 23117 / BGSC 10A6 / LMG 26770 / FZB42) (Bacillus amyloliquefaciens subsp. plantarum) protein is Peptidyl-tRNA hydrolase.